The chain runs to 890 residues: Receptor like protein 23 (890 aa).

The N-terminal stretch at 1–22 (MSKALLHLHFLSLFLLCCVCHS) is a signal peptide. Topologically, residues 23–850 (SIFTLNFHFT…EEEEEVLNGR (828 aa)) are extracellular. 5 N-linked (GlcNAc...) asparagine glycosylation sites follow: asparagine 58, asparagine 70, asparagine 91, asparagine 109, and asparagine 145. 27 LRR repeats span residues 97 to 121 (FHQL…GFGN), 123 to 145 (KRLE…SFSN), 146 to 171 (LTML…GLRK), 173 to 195 (IVLD…LFEL), 196 to 218 (HQLR…KFGN), 220 to 243 (HRLE…ISNL), 244 to 268 (TRLT…NLTN), 270 to 290 (YELD…LLTL), 291 to 316 (PFLA…STSS), 318 to 339 (LEIM…ISKL), 340 to 363 (INLK…LFSS), 364 to 389 (LKSL…SYIP), 391 to 411 (TLEM…ILKT), 412 to 436 (LKEL…LWSL), 438 to 461 (LLQS…ILVN), 462 to 485 (SSVL…PLSI), 487 to 506 (GFGV…ICNR), 507 to 527 (SSLA…PPCL), 528 to 551 (RNLE…LCDG), 553 to 575 (SLRT…FVNC), 577 to 598 (SLKF…WLKA), 599 to 623 (LPNL…HQGP), 626 to 650 (FPEL…YFVN), 699 to 724 (LTSY…GLLK), 726 to 747 (LIAV…MANL), 748 to 771 (ENLE…LGSI), and 773 to 796 (FLAY…QITG). 4 N-linked (GlcNAc...) asparagine glycosylation sites follow: asparagine 189, asparagine 207, asparagine 242, and asparagine 265. An N-linked (GlcNAc...) asparagine glycan is attached at asparagine 311. Asparagine 351 carries an N-linked (GlcNAc...) asparagine glycan. Asparagine 461 carries N-linked (GlcNAc...) asparagine glycosylation. N-linked (GlcNAc...) asparagine glycosylation is found at asparagine 505 and asparagine 518. N-linked (GlcNAc...) asparagine glycosylation is present at asparagine 574. Asparagine 730 is a glycosylation site (N-linked (GlcNAc...) asparagine). A glycan (N-linked (GlcNAc...) asparagine) is linked at asparagine 778. A helical transmembrane segment spans residues 851-871 (AVAIGYGSGLLLGLAIAQVIA). Residues 872 to 890 (SYKPEWLVKIIGLNKRRKR) lie on the Cytoplasmic side of the membrane.

This sequence belongs to the RLP family. As to quaternary structure, directly interacts with a 20-mer fragment (nlp20) from NLPs through its extracellular LRR domain. Component of a trimeric complex composed of RLP23, SOBIR1 and BAK1. BAK1 is recruited into a pre-formed RLP23-SOBIR1 complex in a ligand-dependent manner. Interacts with SOBIR1.

The protein resides in the cell membrane. Its function is as follows. Involved in the perception of necrosis and ethylene-inducing peptide 1-like proteins (NLPs), that act as extracellular signals mediating immune activation. Component of the RLP23-SOBIR1-BAK1 complex that mediates NLP-triggered immunity. This is Receptor like protein 23 from Arabidopsis thaliana (Mouse-ear cress).